We begin with the raw amino-acid sequence, 521 residues long: MADNEKLDNQRLKNFKNKGRDLETMRRQRNEVVVELRKNKRDEHLLKRRNVPQEDICEDSDIDGDYRVQNTSLEAIVQNASSDNQGIQLSAVQAARKLLSSDRNPPIDDLIKSGILPILVHCLERDDNPSLQFEAAWALTNIASGTSEQTQAVVQSNAVPLFLRLLHSPHQNVCEQAVWALGNIIGDGPQCRDYVISLGVVKPLLSFISPSIPITFLRNVTWVMVNLCRHKDPPPPMETIQEILPALCVLIHHTDVNILVDTVWALSYLTDAGNEQIQMVIDSGIVPHLVPLLSHQEVKVQTAALRAVGNIVTGTDEQTQVVLNCDALSHFPALLTHPKEKINKEAVWFLSNITAGNQQQVQAVIDANLVPMIIHLLDKGDFGTQKEAAWAISNLTISGRKDQVAYLIQQNVIPPFCNLLTVKDAQVVQVVLDGLSNILKMAEDQAETIANLIEECGGLEKIEQLQNHENEDIYKLAYEIIDQFFSSDDIDEDPSLVPESVQGGTFGFNSSTNVPTEGFQF.

Ala-2 bears the N-acetylalanine mark. Positions 2–58 (ADNEKLDNQRLKNFKNKGRDLETMRRQRNEVVVELRKNKRDEHLLKRRNVPQEDICE) constitute an IBB domain. The Nuclear localization signal signature appears at 43–52 (EHLLKRRNVP). Phosphoserine is present on Ser-60. Residues 66 to 106 (YRVQNTSLEAIVQNASSDNQGIQLSAVQAARKLLSSDRNPP) form an ARM 1; truncated repeat. 8 ARM repeats span residues 107-149 (IDDL…TSEQ), 150-194 (TQAV…CRDY), 195-233 (VISL…HKDP), 234-278 (PPPM…EQIQ), 279-318 (MVID…TDEQ), 319-360 (TQVV…NQQQ), 361-400 (VQAV…ISGR), and 401-443 (KDQV…KMAE). An NLS binding site (major) region spans residues 137–229 (WALTNIASGT…VTWVMVNLCR (93 aa)). The segment at 306-394 (RAVGNIVTGT…QKEAAWAISN (89 aa)) is NLS binding site (minor). One copy of the ARM 10; atypical repeat lies at 447-485 (ETIANLIEECGGLEKIEQLQNHENEDIYKLAYEIIDQFF).

This sequence belongs to the importin alpha family. As to quaternary structure, forms a complex with importin subunit beta-1 (KPNB1). Interacts with SNAI1. Interacts with TALDO1 isoform 1. Interacts with CYB1. In terms of tissue distribution, detected more or less in all tissues examined (Ehrlich ascites tumor cells, testis, kidney, spleen, liver, heart, lung, thymus, skeletal muscle, cerebellum and brain (without cerebellum)). Multiple-sized transcripts were highly expressed, especially in testis.

Its subcellular location is the cytoplasm. It is found in the nucleus. In terms of biological role, functions in nuclear protein import as an adapter protein for nuclear receptor KPNB1. Binds specifically and directly to substrates containing either a simple or bipartite NLS motif. Docking of the importin/substrate complex to the nuclear pore complex (NPC) is mediated by KPNB1 through binding to nucleoporin FxFG repeats and the complex is subsequently translocated through the pore by an energy requiring, Ran-dependent mechanism. At the nucleoplasmic side of the NPC, Ran binds to importin-beta and the three components separate and importin-alpha and -beta are re-exported from the nucleus to the cytoplasm where GTP hydrolysis releases Ran from importin. The directionality of nuclear import is thought to be conferred by an asymmetric distribution of the GTP- and GDP-bound forms of Ran between the cytoplasm and nucleus. Mediates nuclear import of AARS1, MRTFA and RANBP3. This Mus musculus (Mouse) protein is Importin subunit alpha-3 (Kpna4).